Consider the following 394-residue polypeptide: 1-deoxy-D-xylulose 5-phosphate reductoisomerase (394 aa).

NADPH contacts are provided by Thr-13, Gly-14, Ser-15, Val-16, Arg-40, Gln-41, and Asn-127. Lys-128 contributes to the 1-deoxy-D-xylulose 5-phosphate binding site. Residue Glu-129 coordinates NADPH. Asp-153 lines the Mn(2+) pocket. Positions 154, 155, 184, and 207 each coordinate 1-deoxy-D-xylulose 5-phosphate. Residue Glu-155 coordinates Mn(2+). NADPH is bound at residue Gly-213. Residues Ser-220, Asn-225, Lys-226, and Glu-229 each coordinate 1-deoxy-D-xylulose 5-phosphate. Glu-229 contributes to the Mn(2+) binding site.

It belongs to the DXR family. Mg(2+) serves as cofactor. The cofactor is Mn(2+).

It carries out the reaction 2-C-methyl-D-erythritol 4-phosphate + NADP(+) = 1-deoxy-D-xylulose 5-phosphate + NADPH + H(+). It functions in the pathway isoprenoid biosynthesis; isopentenyl diphosphate biosynthesis via DXP pathway; isopentenyl diphosphate from 1-deoxy-D-xylulose 5-phosphate: step 1/6. Its function is as follows. Catalyzes the NADPH-dependent rearrangement and reduction of 1-deoxy-D-xylulose-5-phosphate (DXP) to 2-C-methyl-D-erythritol 4-phosphate (MEP). The chain is 1-deoxy-D-xylulose 5-phosphate reductoisomerase from Chromobacterium violaceum (strain ATCC 12472 / DSM 30191 / JCM 1249 / CCUG 213 / NBRC 12614 / NCIMB 9131 / NCTC 9757 / MK).